Reading from the N-terminus, the 418-residue chain is Magnesium transporter MRS2-E (418 aa).

Positions 119 to 146 are disordered; that stretch reads DAAPSTNPAAADRGNGTEQGDQGSVPGL. The stretch at 166-232 forms a coiled coil; it reads VCLEHACKDL…RDELEHLLDD (67 aa). Basic and acidic residues predominate over residues 258-268; sequence DSHKYASVDHD. The segment at 258 to 287 is disordered; it reads DSHKYASVDHDDDREEEDHDDETESGRESS. Over residues 269 to 280 the composition is skewed to acidic residues; that stretch reads DDREEEDHDDET. The helical transmembrane segment at 344 to 364 threads the bilayer; it reads GVMLTTATVVVTAGIVVVSLF. Residues 365 to 367 carry the Required for magnesium transport activity motif; the sequence is GMN. The helical transmembrane segment at 389-409 threads the bilayer; the sequence is FWETTFGTVAGCIAIYLLAIY.

The protein belongs to the CorA metal ion transporter (MIT) (TC 1.A.35.5) family.

It is found in the membrane. Functionally, magnesium transporter that may mediate the influx of magnesium. This chain is Magnesium transporter MRS2-E (MRS2-E), found in Oryza sativa subsp. indica (Rice).